A 351-amino-acid chain; its full sequence is MNFDKKNSFFSWINSKIKKNNKKEKKENILLKKEKEGIHTIQNIDNKKIDFLFKLKNSLNKTKQFFGDSISRIFLSKKIDDAFFEELEDTMLLSDIGVHTTDQIISKLINDATHKELKNPEKVYFLLKEHMYSILNRVEKPLKISNHTPFVILVVGINGTGKTTTVSKLAKKYKLAGKSVMLAAADTFRAAGIEQLQILGKRNNIPVISQSSGSDPASVAFDAVKSAISKKIDVLIIDTAGRLHNKLHLLEELKKMVRVIKKLNLSAPHEIMLIIDACNGQNTIKQTEMFHKAINLTGLVITKLDGTAKGGVIFSLANQFLIPIRYIGIGEKTTDLVVFNSNDFIKSIFVK.

GTP is bound by residues G156–T163, D238–R242, and T302–D305.

Belongs to the GTP-binding SRP family. FtsY subfamily. In terms of assembly, part of the signal recognition particle protein translocation system, which is composed of SRP and FtsY. SRP is a ribonucleoprotein composed of Ffh and a 4.5S RNA molecule.

The protein localises to the cell membrane. The protein resides in the cytoplasm. The enzyme catalyses GTP + H2O = GDP + phosphate + H(+). Functionally, involved in targeting and insertion of nascent membrane proteins into the cytoplasmic membrane. Acts as a receptor for the complex formed by the signal recognition particle (SRP) and the ribosome-nascent chain (RNC). Interaction with SRP-RNC leads to the transfer of the RNC complex to the Sec translocase for insertion into the membrane, the hydrolysis of GTP by both Ffh and FtsY, and the dissociation of the SRP-FtsY complex into the individual components. This is Signal recognition particle receptor FtsY from Buchnera aphidicola subsp. Schizaphis graminum (strain Sg).